We begin with the raw amino-acid sequence, 391 residues long: Probable tRNA sulfurtransferase (391 aa).

The 108-residue stretch at Asp-60–Leu-167 folds into the THUMP domain. ATP is bound by residues Leu-184–Leu-185, Tyr-209–Phe-210, Arg-266, Gly-288, and Gln-297.

The protein belongs to the ThiI family.

The protein resides in the cytoplasm. It catalyses the reaction [ThiI sulfur-carrier protein]-S-sulfanyl-L-cysteine + a uridine in tRNA + 2 reduced [2Fe-2S]-[ferredoxin] + ATP + H(+) = [ThiI sulfur-carrier protein]-L-cysteine + a 4-thiouridine in tRNA + 2 oxidized [2Fe-2S]-[ferredoxin] + AMP + diphosphate. The catalysed reaction is [ThiS sulfur-carrier protein]-C-terminal Gly-Gly-AMP + S-sulfanyl-L-cysteinyl-[cysteine desulfurase] + AH2 = [ThiS sulfur-carrier protein]-C-terminal-Gly-aminoethanethioate + L-cysteinyl-[cysteine desulfurase] + A + AMP + 2 H(+). It participates in cofactor biosynthesis; thiamine diphosphate biosynthesis. Functionally, catalyzes the ATP-dependent transfer of a sulfur to tRNA to produce 4-thiouridine in position 8 of tRNAs, which functions as a near-UV photosensor. Also catalyzes the transfer of sulfur to the sulfur carrier protein ThiS, forming ThiS-thiocarboxylate. This is a step in the synthesis of thiazole, in the thiamine biosynthesis pathway. The sulfur is donated as persulfide by IscS. This chain is Probable tRNA sulfurtransferase, found in Lachnoclostridium phytofermentans (strain ATCC 700394 / DSM 18823 / ISDg) (Clostridium phytofermentans).